The primary structure comprises 695 residues: Sodium-dependent phosphate transport protein 2B (695 aa).

The tract at residues 1-44 (MAPWPELENAHPNPNKFIEGASGPQSSIPDKDKGTSKTNDSGTP) is disordered. Residues 1–90 (MAPWPELENA…KWSERDSKGK (90 aa)) are Cytoplasmic-facing. A helical membrane pass occupies residues 91-111 (ILCIFQGIGKFILLLGFLYLF). Residues 112 to 136 (VCSLDVLSSAFQLVGGKMAGQFFSN) are Extracellular-facing. A helical membrane pass occupies residues 137 to 157 (NSIMSNPVAGLVIGVLVTVMV). Residues 158–213 (QSSSTSSSIIVSMVASSLLSVRAAIPIIMGANIGTSITNTIVALMQAGDRNEFRRA) lie on the Cytoplasmic side of the membrane. A helical transmembrane segment spans residues 214 to 234 (FAGATVHDFFNWLSVLVLLPL). Topologically, residues 235-363 (EAATHYLEKL…FVNFSLPDLA (129 aa)) are extracellular. Residues asparagine 295, asparagine 313, asparagine 321, asparagine 340, and asparagine 356 are each glycosylated (N-linked (GlcNAc...) asparagine). Cysteine 303 and cysteine 350 form a disulfide bridge. The chain crosses the membrane as a helical span at residues 364–384 (VGIILLTVSLLILCGCLIMIV). At 385–408 (KLLGSVLRGQVATVIKKTLNTDFP) the chain is on the cytoplasmic side. A helical transmembrane segment spans residues 409 to 429 (FPFAWLTGYLAILVGAGMTFI). Over 430-486 (VQSSSVFTSAMTPLIGIGVISIERAYPLTLGSNIGTTTTAILAALASPGNTLRSSLQ) the chain is Extracellular. Residues 487–507 (IALCHFFFNISGILLWYPIPF) form a helical membrane-spanning segment. At 508–526 (TRLPIRLAKGLGNISAKYR) the chain is on the cytoplasmic side. A helical membrane pass occupies residues 527–547 (WFAVFYLIFFFLLTPLTVFGL). The Extracellular segment spans residues 548–551 (SLAG). A helical transmembrane segment spans residues 552 to 572 (WPVLVGVGVPIILLILLVLCL). The Cytoplasmic portion of the chain corresponds to 573 to 695 (RMLQARCPRI…MKALSNTTVF (123 aa)).

The protein belongs to the SLC34A transporter family. Highly expressed in the lung, in type II alveolar cells. Moderately expressed in kidney followed by small intestine.

It is found in the apical cell membrane. It catalyses the reaction 3 Na(+)(out) + phosphate(out) = 3 Na(+)(in) + phosphate(in). In terms of biological role, involved in actively transporting phosphate into cells via Na(+) cotransport. The protein is Sodium-dependent phosphate transport protein 2B (Slc34a2) of Rattus norvegicus (Rat).